Consider the following 288-residue polypeptide: Pantothenate synthetase (288 aa).

30-37 (MGFLHEGH) provides a ligand contact to ATP. The active-site Proton donor is His37. Gln61 lines the (R)-pantoate pocket. Residue Gln61 coordinates beta-alanine. An ATP-binding site is contributed by 147–150 (GLKD). Gln153 is a (R)-pantoate binding site. ATP is bound by residues Val176 and 184–187 (KSSR).

The protein belongs to the pantothenate synthetase family. As to quaternary structure, homodimer.

It localises to the cytoplasm. It catalyses the reaction (R)-pantoate + beta-alanine + ATP = (R)-pantothenate + AMP + diphosphate + H(+). The protein operates within cofactor biosynthesis; (R)-pantothenate biosynthesis; (R)-pantothenate from (R)-pantoate and beta-alanine: step 1/1. In terms of biological role, catalyzes the condensation of pantoate with beta-alanine in an ATP-dependent reaction via a pantoyl-adenylate intermediate. The chain is Pantothenate synthetase from Bacillus pumilus (strain SAFR-032).